A 666-amino-acid polypeptide reads, in one-letter code: Probable potassium transport system protein Kup (666 aa).

12 consecutive transmembrane segments (helical) span residues 16–36 (GFIIALGIVYGDIGTSPLYTM), 58–78 (ISLIIWTLTLITTIKYVLVAL), 99–119 (TPWLIVPAVIGGATLLSDGAL), 141–161 (IFQNQSNVIFATLFILLLLFA), 167–187 (TGVIGKLFGPIMFIWFAFLGI), 221–241 (IFILGSIFLATTGAEALYSDL), 253–273 (WPFVKVAIILSYCGQGAWILA), 292–312 (FTMHVVILATLAAIIASQALI), 343–363 (TYIPVINWFLFAITTSIVLLF), 373–393 (YGLAITITMLMTTILLSFFLI), 402–422 (VLLMMIFFGILEGIFFLASAV), and 424–444 (FMHGGYVVVIIAVAIIFIMTI).

This sequence belongs to the HAK/KUP transporter (TC 2.A.72) family.

It localises to the cell membrane. It catalyses the reaction K(+)(in) + H(+)(in) = K(+)(out) + H(+)(out). Its function is as follows. Transport of potassium into the cell. Likely operates as a K(+):H(+) symporter. This chain is Probable potassium transport system protein Kup, found in Streptococcus agalactiae serotype V (strain ATCC BAA-611 / 2603 V/R).